The primary structure comprises 281 residues: Nucleoid occlusion protein (281 aa).

The H-T-H motif DNA-binding region spans 145–164 (EALAQRLGKGQSTIANKLRL).

The protein belongs to the ParB family.

The protein localises to the cytoplasm. Its subcellular location is the nucleoid. Its function is as follows. Effects nucleoid occlusion by binding relatively nonspecifically to DNA and preventing the assembly of the division machinery in the vicinity of the nucleoid, especially under conditions that disturb the cell cycle. It helps to coordinate cell division and chromosome segregation by preventing the formation of the Z ring through the nucleoid, which would cause chromosome breakage. This Geobacillus sp. (strain WCH70) protein is Nucleoid occlusion protein.